A 367-amino-acid polypeptide reads, in one-letter code: Phosphoribosylaminoimidazole-succinocarboxamide synthase (367 aa).

The protein belongs to the SAICAR synthetase family.

The enzyme catalyses 5-amino-1-(5-phospho-D-ribosyl)imidazole-4-carboxylate + L-aspartate + ATP = (2S)-2-[5-amino-1-(5-phospho-beta-D-ribosyl)imidazole-4-carboxamido]succinate + ADP + phosphate + 2 H(+). It functions in the pathway purine metabolism; IMP biosynthesis via de novo pathway; 5-amino-1-(5-phospho-D-ribosyl)imidazole-4-carboxamide from 5-amino-1-(5-phospho-D-ribosyl)imidazole-4-carboxylate: step 1/2. In Shewanella baltica (strain OS223), this protein is Phosphoribosylaminoimidazole-succinocarboxamide synthase.